Reading from the N-terminus, the 523-residue chain is 2-isopropylmalate synthase (523 aa).

One can recognise a Pyruvate carboxyltransferase domain in the interval Val-5–Trp-267. Mn(2+) contacts are provided by Asp-14, His-202, His-204, and Asn-238. Residues Arg-392–Val-523 form a regulatory domain region.

It belongs to the alpha-IPM synthase/homocitrate synthase family. LeuA type 1 subfamily. In terms of assembly, homodimer. It depends on Mn(2+) as a cofactor.

It localises to the cytoplasm. It catalyses the reaction 3-methyl-2-oxobutanoate + acetyl-CoA + H2O = (2S)-2-isopropylmalate + CoA + H(+). It participates in amino-acid biosynthesis; L-leucine biosynthesis; L-leucine from 3-methyl-2-oxobutanoate: step 1/4. Its function is as follows. Catalyzes the condensation of the acetyl group of acetyl-CoA with 3-methyl-2-oxobutanoate (2-ketoisovalerate) to form 3-carboxy-3-hydroxy-4-methylpentanoate (2-isopropylmalate). The sequence is that of 2-isopropylmalate synthase from Klebsiella pneumoniae subsp. pneumoniae (strain ATCC 700721 / MGH 78578).